The primary structure comprises 530 residues: Glucose-6-phosphate isomerase (530 aa).

Glu-335 functions as the Proton donor in the catalytic mechanism. Residues His-366 and Lys-495 contribute to the active site.

The protein belongs to the GPI family.

The protein localises to the cytoplasm. It carries out the reaction alpha-D-glucose 6-phosphate = beta-D-fructose 6-phosphate. The protein operates within carbohydrate biosynthesis; gluconeogenesis. Its pathway is carbohydrate degradation; glycolysis; D-glyceraldehyde 3-phosphate and glycerone phosphate from D-glucose: step 2/4. In terms of biological role, catalyzes the reversible isomerization of glucose-6-phosphate to fructose-6-phosphate. This chain is Glucose-6-phosphate isomerase, found in Roseobacter denitrificans (strain ATCC 33942 / OCh 114) (Erythrobacter sp. (strain OCh 114)).